The following is a 432-amino-acid chain: Mitochondrial distribution and morphology protein 12 (432 aa).

An SMP-LTD domain is found at 1–432 (MSIEVDWRAA…VFPSFWTFLI (432 aa)). Disordered regions lie at residues 182 to 273 (WTDP…PRMR) and 354 to 377 (QQEA…PKRQ). A compositionally biased stretch (low complexity) spans 214 to 234 (TSNPTSRPSTSSTLPSHPSAS). 2 stretches are compositionally biased toward basic and acidic residues: residues 243-253 (TGKEHGSLAED) and 355-364 (QEARGQDDRP).

Belongs to the MDM12 family. Component of the ER-mitochondria encounter structure (ERMES) or MDM complex, composed of mmm1, mdm10, mdm12 and mdm34. A mmm1 homodimer associates with one molecule of mdm12 on each side in a pairwise head-to-tail manner, and the SMP-LTD domains of mmm1 and mdm12 generate a continuous hydrophobic tunnel for phospholipid trafficking.

The protein resides in the mitochondrion outer membrane. Its subcellular location is the endoplasmic reticulum membrane. Component of the ERMES/MDM complex, which serves as a molecular tether to connect the endoplasmic reticulum (ER) and mitochondria. Components of this complex are involved in the control of mitochondrial shape and protein biogenesis, and function in nonvesicular lipid trafficking between the ER and mitochondria. Mdm12 is required for the interaction of the ER-resident membrane protein mmm1 and the outer mitochondrial membrane-resident beta-barrel protein mdm10. The mdm12-mmm1 subcomplex functions in the major beta-barrel assembly pathway that is responsible for biogenesis of all mitochondrial outer membrane beta-barrel proteins, and acts in a late step after the SAM complex. The mdm10-mdm12-mmm1 subcomplex further acts in the TOM40-specific pathway after the action of the mdm12-mmm1 complex. Essential for establishing and maintaining the structure of mitochondria and maintenance of mtDNA nucleoids. This chain is Mitochondrial distribution and morphology protein 12, found in Aspergillus oryzae (strain ATCC 42149 / RIB 40) (Yellow koji mold).